The sequence spans 440 residues: 3-phosphoshikimate 1-carboxyvinyltransferase (440 aa).

Residues lysine 25, serine 26, and arginine 30 each coordinate 3-phosphoshikimate. Lysine 25 is a binding site for phosphoenolpyruvate. Glycine 96 and arginine 124 together coordinate phosphoenolpyruvate. 4 residues coordinate 3-phosphoshikimate: serine 168, glutamine 169, aspartate 310, and lysine 337. Phosphoenolpyruvate is bound at residue glutamine 169. Aspartate 310 serves as the catalytic Proton acceptor. Phosphoenolpyruvate contacts are provided by arginine 341, arginine 382, and lysine 409.

It belongs to the EPSP synthase family. In terms of assembly, monomer.

Its subcellular location is the cytoplasm. The enzyme catalyses 3-phosphoshikimate + phosphoenolpyruvate = 5-O-(1-carboxyvinyl)-3-phosphoshikimate + phosphate. It participates in metabolic intermediate biosynthesis; chorismate biosynthesis; chorismate from D-erythrose 4-phosphate and phosphoenolpyruvate: step 6/7. In terms of biological role, catalyzes the transfer of the enolpyruvyl moiety of phosphoenolpyruvate (PEP) to the 5-hydroxyl of shikimate-3-phosphate (S3P) to produce enolpyruvyl shikimate-3-phosphate and inorganic phosphate. This chain is 3-phosphoshikimate 1-carboxyvinyltransferase, found in Chlamydia trachomatis serovar A (strain ATCC VR-571B / DSM 19440 / HAR-13).